Reading from the N-terminus, the 719-residue chain is Pesticidal crystal protein Cry1Id (719 aa).

It belongs to the delta endotoxin family.

In terms of biological role, promotes colloidosmotic lysis by binding to the midgut epithelial cells of many lepidopteran larvae. Active on Plutella xylostella and on Bombyx mori. The protein is Pesticidal crystal protein Cry1Id (cry1Id) of Bacillus thuringiensis.